Reading from the N-terminus, the 425-residue chain is Glutamate-1-semialdehyde 2,1-aminomutase (425 aa).

Lys-265 is subject to N6-(pyridoxal phosphate)lysine.

This sequence belongs to the class-III pyridoxal-phosphate-dependent aminotransferase family. HemL subfamily. Homodimer. The cofactor is pyridoxal 5'-phosphate.

Its subcellular location is the cytoplasm. The enzyme catalyses (S)-4-amino-5-oxopentanoate = 5-aminolevulinate. It functions in the pathway porphyrin-containing compound metabolism; protoporphyrin-IX biosynthesis; 5-aminolevulinate from L-glutamyl-tRNA(Glu): step 2/2. The chain is Glutamate-1-semialdehyde 2,1-aminomutase from Clostridium perfringens (strain 13 / Type A).